A 120-amino-acid chain; its full sequence is Large ribosomal subunit protein bL20 (120 aa).

Belongs to the bacterial ribosomal protein bL20 family.

Binds directly to 23S ribosomal RNA and is necessary for the in vitro assembly process of the 50S ribosomal subunit. It is not involved in the protein synthesizing functions of that subunit. This is Large ribosomal subunit protein bL20 from Paracidovorax citrulli (strain AAC00-1) (Acidovorax citrulli).